We begin with the raw amino-acid sequence, 410 residues long: Proteasomal ubiquitin receptor ADRM1 (410 aa).

The 114-residue stretch at 17–130 (SSSKYLVEFR…RKVNEYLNNP (114 aa)) folds into the Pru domain. Serine 18 carries the post-translational modification Phosphoserine. Over residues 191 to 257 (GSGGPATSSS…PAAQTPSLPA (67 aa)) the composition is skewed to low complexity. Disordered regions lie at residues 191–264 (GSGG…SSTQ) and 381–410 (FAKAMEGSDSKTDDGDSKDKKDDDEDMSLD). The DEUBAD domain maps to 281-395 (PAMPTEGSGV…EGSDSKTDDG (115 aa)). A compositionally biased stretch (basic and acidic residues) spans 381 to 401 (FAKAMEGSDSKTDDGDSKDKK).

The protein belongs to the ADRM1 family. In terms of assembly, component of the 19S proteasome regulatory particle complex. The 26S proteasome consists of a 20S core particle (CP) and two 19S regulatory subunits (RP).

The protein resides in the cytoplasm. Its subcellular location is the nucleus. Component of the 26S proteasome, a multiprotein complex involved in the ATP-dependent degradation of ubiquitinated proteins. This complex plays a key role in the maintenance of protein homeostasis by removing misfolded or damaged proteins, which could impair cellular functions, and by removing proteins whose functions are no longer required. Therefore, the proteasome participates in numerous cellular processes, including cell cycle progression, apoptosis, or DNA damage repair. Within the complex, functions as a proteasomal ubiquitin receptor. This Danio rerio (Zebrafish) protein is Proteasomal ubiquitin receptor ADRM1 (adrm1b).